Here is a 442-residue protein sequence, read N- to C-terminus: uncharacterized protein (442 aa).

Positions M1–A23 are cleaved as a signal peptide. Disordered stretches follow at residues T36 to D67 and A91 to R115. The segment covering T48–D67 has biased composition (low complexity). N-linked (GlcNAc...) asparagine glycans are attached at residues N64, N92, N99, N130, N174, N225, N244, N346, N363, N386, and N398.

The protein resides in the secreted. This is an uncharacterized protein from Arthroderma benhamiae (strain ATCC MYA-4681 / CBS 112371) (Trichophyton mentagrophytes).